The following is a 222-amino-acid chain: 26S proteasome non-ATPase regulatory subunit 9 (222 aa).

A PDZ domain is found at glutamine 108 to arginine 194. Serine 128 carries the phosphoserine modification.

This sequence belongs to the proteasome subunit p27 family. In terms of assembly, interacts with PSMC3. Part of a transient complex (modulator) containing PSMD9, PSMC6 and PSMC3 formed during the assembly of the 26S proteasome.

Functionally, acts as a chaperone during the assembly of the 26S proteasome, specifically of the base subcomplex of the PA700/19S regulatory complex (RC). During the base subcomplex assembly is part of an intermediate PSMD9:PSMC6:PSMC3 module, also known as modulator trimer complex; PSMD9 is released during the further base assembly process. The sequence is that of 26S proteasome non-ATPase regulatory subunit 9 (Psmd9) from Rattus norvegicus (Rat).